Here is a 266-residue protein sequence, read N- to C-terminus: MKLSLSPPPYADAPVVVLISGLGGSGSYWLPQLAVLEQEYQVVCYDQRGTGNNPDTLAEDYSIAQMAAELHQALVAAGIEHYAVVGHALGALVGMQLALDYPASVTVLISVNGWLRINAHTRRCFQVRERLLYSGGAQAWVEAQPLFLYPADWMAARAPRLEAEDALALAHFQGKNNLLRRLNALKRADFSHHADRIRCPVQIICASDDLLVPTACSSELHAALPDSQKMVMPYGGHACNVTDPETFNALLLNGLASLLHHREAAL.

It belongs to the AB hydrolase superfamily. Hydrolase RutD family.

The enzyme catalyses carbamate + 2 H(+) = NH4(+) + CO2. Involved in pyrimidine catabolism. May facilitate the hydrolysis of carbamate, a reaction that can also occur spontaneously. This is Putative carbamate hydrolase RutD from Escherichia coli (strain B / BL21-DE3).